Reading from the N-terminus, the 223-residue chain is Sigma non-opioid intracellular receptor 1 (223 aa).

Residues Met-1–Trp-9 lie on the Lumenal side of the membrane. The tract at residues Pro-2–Arg-8 is targeting to endoplasmic reticulum-associated lipid droplets. Residues Ala-10–Leu-30 traverse the membrane as a helical segment. The Cytoplasmic segment spans residues Gly-31 to Ser-223. Residues Ser-99–Leu-106 are important for ligand-binding. Residues Val-177–Ser-223 form a C-terminal hydrophobic region region.

It belongs to the ERG2 family. As to quaternary structure, homotrimer. Interacts with KCNA4. Interacts with KCNA2; cocaine consumption leads to increased interaction. Forms a ternary complex with ANK2 and ITPR3. The complex is disrupted by agonists. Interacts with RNF112 in an oxidative stress-regulated manner. In terms of tissue distribution, widely expressed with higher expression in liver, brain, kidney and thymus. Expressed throughout the brain with higher expression within cerebral cortex, hippocampus and cerebellum. Within the hippocampus expressed in cornu ammonis pyramidal neurons, the granular cells of the dentate gyrus as well as interneurons. Within the cerebellum, expressed in Purkinje cell bodies. Highly expressed in the brainstem and motor neurons of the spinal cord. Expressed by neural retina, retinal pigment epithelial cells and lens.

Its subcellular location is the nucleus inner membrane. It is found in the nucleus outer membrane. The protein resides in the nucleus envelope. It localises to the cytoplasmic vesicle. The protein localises to the endoplasmic reticulum membrane. Its subcellular location is the membrane. It is found in the lipid droplet. The protein resides in the cell junction. It localises to the cell membrane. The protein localises to the cell projection. Its subcellular location is the growth cone. It is found in the postsynaptic density membrane. In terms of biological role, functions in lipid transport from the endoplasmic reticulum and is involved in a wide array of cellular functions probably through regulation of the biogenesis of lipid microdomains at the plasma membrane. Involved in the regulation of different receptors it plays a role in BDNF signaling and EGF signaling. Also regulates ion channels like the potassium channel and could modulate neurotransmitter release. Plays a role in calcium signaling through modulation together with ANK2 of the ITP3R-dependent calcium efflux at the endoplasmic reticulum. Plays a role in several other cell functions including proliferation, survival and death. Originally identified for its ability to bind various psychoactive drugs it is involved in learning processes, memory and mood alteration. Necessary for proper mitochondrial axonal transport in motor neurons, in particular the retrograde movement of mitochondria. Plays a role in protecting cells against oxidative stress-induced cell death via its interaction with RNF112. The polypeptide is Sigma non-opioid intracellular receptor 1 (Sigmar1) (Mus musculus (Mouse)).